The chain runs to 475 residues: PRAME family member 20 (475 aa).

An LRR 1; degenerate repeat occupies 97-124; the sequence is RWKLQVLDLQDVSENFWMVWSEAMARRC. The LRR 2; degenerate repeat unit spans residues 179-203; it reads HLCCKKLKMLGMLFHNIRNILKTVN. One copy of the LRR 3; degenerate repeat lies at 204 to 230; the sequence is LDCIQEVEVNCNWTLPVLAEFTPYLGQ. Residues 231-265 form an LRR 4; degenerate repeat; that stretch reads MRNLRKLVLSDIDSRYISPEQKKEFVTQFTTQFLK. LRR repeat units lie at residues 266–291, 292–323, 324–342, 348–375, and 376–400; these read LRCL…LSCL, KTSL…GQLK, TLDL…PLQV, AATL…ALSR, and CFEL…LLCH.

Belongs to the PRAME family.

This is PRAME family member 20 from Homo sapiens (Human).